The primary structure comprises 494 residues: MRKAAAAAVAAAAAVGVALLVRRQLREAKRWGRADAVLRELEERCAAPPGRLRQVADAMAVEMHAGLASEGGSKLKMIISYVDALPSGEEKGVFYALDLGGTNFRVLRVQLGGKEGRVIKQEHDEISIPPHLMTGGSNELFDFIASSLAKFVASEGEDFHLAEGRQRELGFTFSFPVKQTSIASGTLINWTKGFSIDETVGEDVVTELTKALERQGLDMKVTALINDTIGTLAGGRYDDNDVIAAVILGTGTNAAYVERANAIPKWHDLLPKSGDMVINMEWGNFRSSHLPLTEFDQALDAESLNPGEQVYEKLISGMYLGEIVRRVLLKMAEEASLFGDEVPPKLKIPFIIRTPYMSMMHCDRSPDLRTVGAKLKDILGVQNTSLKTRRLVVDVCDIVAKRAAHLAAAGIHGILKKLGRDVPNTDKQRTVIAVDGGLYEHYTIFAECVESTLRDMLGEDVSSTIVIKLAKDGSGIGAALLAAAHSQYREAEEL.

The 452-residue stretch at 32–483 (GRADAVLREL…SGIGAALLAA (452 aa)) folds into the Hexokinase domain. The interval 87–225 (SGEEKGVFYA…GLDMKVTALI (139 aa)) is hexokinase small subdomain. Positions 101, 102, and 103 each coordinate ADP. Residues T191, K192, N226, and D227 each contribute to the D-glucose site. The hexokinase large subdomain stretch occupies residues 226–472 (NDTIGTLAGG…STIVIKLAKD (247 aa)). Residue T250 coordinates ADP. D-glucose contacts are provided by N253, E281, and E312. Residue G437 participates in ADP binding.

It belongs to the hexokinase family. In terms of tissue distribution, expressed in roots, leaves, flowers, immature seeds, endosperm and seed coat.

It catalyses the reaction a D-hexose + ATP = a D-hexose 6-phosphate + ADP + H(+). The catalysed reaction is D-fructose + ATP = D-fructose 6-phosphate + ADP + H(+). It carries out the reaction D-glucose + ATP = D-glucose 6-phosphate + ADP + H(+). Its pathway is carbohydrate metabolism; hexose metabolism. It participates in carbohydrate degradation; glycolysis; D-glyceraldehyde 3-phosphate and glycerone phosphate from D-glucose: step 1/4. Fructose and glucose phosphorylating enzyme. This Oryza sativa subsp. japonica (Rice) protein is Hexokinase-2 (HXK2).